The chain runs to 210 residues: Probable HTH-type transcriptional regulator ArpR (210 aa).

Positions 10-70 constitute an HTH tetR-type domain; it reads QETRAQIIEA…ALLDSLHETH (61 aa). The segment at residues 33–52 is a DNA-binding region (H-T-H motif); it reads TLADIAELAGVTRGAIYWHF.

Functionally, probable regulatory protein for the antibiotic efflux pump arpABC operon. May function as a repressor. This chain is Probable HTH-type transcriptional regulator ArpR (arpR), found in Pseudomonas putida (Arthrobacter siderocapsulatus).